Here is a 340-residue protein sequence, read N- to C-terminus: CMP-sialic acid transporter 1 (340 aa).

The Cytoplasmic segment spans residues 1–5 (MAATP). Residues 6-26 (WYFVAVLLTILTSSQGILTTL) traverse the membrane as a helical segment. At 27-36 (SQSDGGYKYD) the chain is on the lumenal side. A helical membrane pass occupies residues 37–57 (YATVPFLAEVFKLIISGLFLW). The Cytoplasmic portion of the chain corresponds to 58-78 (REMRTSSSTTSRITTDWKSVR). The chain crosses the membrane as a helical span at residues 79-99 (LFVIPSLIYLIHNNVQFATLT). Residues 100 to 102 (YVD) lie on the Lumenal side of the membrane. The chain crosses the membrane as a helical span at residues 103–125 (TSTYQIMGNLKIVTTGILFRLFL). Over 126–168 (KRKLSKLQWMAIGLLAVGTTTSQVKGCGEASCDSLFTAPIQGY) the chain is Cytoplasmic. The helical transmembrane segment at 169–189 (LLGILSAGLSALAGIYTEFLM) threads the bilayer. Topologically, residues 190-200 (KRNNDTLYWQN) are lumenal. The helical transmembrane segment at 201-217 (LQLYTFGSLFNVARLIA) threads the bilayer. The Cytoplasmic segment spans residues 218–238 (DDFRHGFEKGPWWQRIFDGYS). The helical transmembrane segment at 239-259 (ITTWLVVLNLGSTGLLVSWLM) threads the bilayer. The Lumenal segment spans residues 260-282 (KYADNIVKVYSTSMAMLLTMVAS). A helical membrane pass occupies residues 283–303 (IYLFSFKPTLQLFLGIVICIM). Residues 304 to 340 (SLHMYFAPPHTLVDLPVTNEAHAKTLKQVVVEEKTDS) are Cytoplasmic-facing.

The protein belongs to the nucleotide-sugar transporter family. CMP-Sialate:CMP antiporter (TC 2.A.7.12) subfamily.

The protein localises to the golgi apparatus membrane. Essential protein. Sugar transporter involved in the transport of CMP-sialic acid from the cytoplasm into the Golgi. The protein is CMP-sialic acid transporter 1 of Arabidopsis thaliana (Mouse-ear cress).